The chain runs to 734 residues: Photosystem I P700 chlorophyll a apoprotein A2 (734 aa).

The next 8 membrane-spanning stretches (helical) occupy residues 46–69 (IFASHFGQLAIIFLWTSGNLFHVA), 135–158 (LYTGALFLLCLSAISLIAGWLHLQ), 175–199 (LNHHLSGLFGVSSLAWAGHLVHVAI), 273–291 (IAHHHLAIAFLFLVAGHMY), 330–353 (IHFQLGLALASLGVITSLVAQHMY), 369–395 (AALYTHHQYIAGFIMTGAFAHGAIFFI), 417–439 (AIISHLSWASLFLGFHTLGLYVH), and 517–535 (FLVHHAIALGLHTTTLILV). Residues Cys-559 and Cys-568 each contribute to the [4Fe-4S] cluster site. 2 helical membrane passes run 575–596 (AFYLAVFWMLNTIGWVTFYWHW) and 643–665 (LSVWAWMFLFGHLVWATGFMFLI). The chlorophyll a site is built by His-654, Met-662, and Tyr-670. Trp-671 is a phylloquinone binding site. A helical membrane pass occupies residues 707-727 (LVGLAHFSVGYIFTYAAFLIA).

It belongs to the PsaA/PsaB family. As to quaternary structure, the PsaA/B heterodimer binds the P700 chlorophyll special pair and subsequent electron acceptors. PSI consists of a core antenna complex that captures photons, and an electron transfer chain that converts photonic excitation into a charge separation. The eukaryotic PSI reaction center is composed of at least 11 subunits. Requires P700 is a chlorophyll a/chlorophyll a' dimer, A0 is one or more chlorophyll a, A1 is one or both phylloquinones and FX is a shared 4Fe-4S iron-sulfur center. as cofactor.

The protein resides in the plastid. It localises to the chloroplast thylakoid membrane. It carries out the reaction reduced [plastocyanin] + hnu + oxidized [2Fe-2S]-[ferredoxin] = oxidized [plastocyanin] + reduced [2Fe-2S]-[ferredoxin]. PsaA and PsaB bind P700, the primary electron donor of photosystem I (PSI), as well as the electron acceptors A0, A1 and FX. PSI is a plastocyanin-ferredoxin oxidoreductase, converting photonic excitation into a charge separation, which transfers an electron from the donor P700 chlorophyll pair to the spectroscopically characterized acceptors A0, A1, FX, FA and FB in turn. Oxidized P700 is reduced on the lumenal side of the thylakoid membrane by plastocyanin. The protein is Photosystem I P700 chlorophyll a apoprotein A2 of Dioscorea elephantipes (Elephant's foot yam).